A 71-amino-acid chain; its full sequence is uncharacterized protein (71 aa).

This is an uncharacterized protein from Methanocaldococcus jannaschii (strain ATCC 43067 / DSM 2661 / JAL-1 / JCM 10045 / NBRC 100440) (Methanococcus jannaschii).